A 254-amino-acid chain; its full sequence is MDKLIIGGIEIKNRLFVGSGKYPSNEIIKDVLEGSGSQVITLALRRVDLDNKEEDILQNIPKDVILLPNTSGATNAEEAIRIARIARAMGCGNWIKIEVISDSKYLLPDNEETIKATKVLADEGFIVLPYMCPDIYAGRRLIEAGAAAVMPLGAPIGSNRGLKTKELIQIMIDELDIPIIVDAGIGKPSQAMEAMEMGAAACLVNTAIASSEDPINMARAFKVAVEGGRLAYEAKMGRESKFGNASSPLTGFLD.

Lys-96 (schiff-base intermediate with DXP) is an active-site residue. Residues Gly-157, Ala-183–Gly-184, and Asn-205–Thr-206 contribute to the 1-deoxy-D-xylulose 5-phosphate site.

Belongs to the ThiG family. As to quaternary structure, homotetramer. Forms heterodimers with either ThiH or ThiS.

The protein resides in the cytoplasm. The catalysed reaction is [ThiS sulfur-carrier protein]-C-terminal-Gly-aminoethanethioate + 2-iminoacetate + 1-deoxy-D-xylulose 5-phosphate = [ThiS sulfur-carrier protein]-C-terminal Gly-Gly + 2-[(2R,5Z)-2-carboxy-4-methylthiazol-5(2H)-ylidene]ethyl phosphate + 2 H2O + H(+). The protein operates within cofactor biosynthesis; thiamine diphosphate biosynthesis. Functionally, catalyzes the rearrangement of 1-deoxy-D-xylulose 5-phosphate (DXP) to produce the thiazole phosphate moiety of thiamine. Sulfur is provided by the thiocarboxylate moiety of the carrier protein ThiS. In vitro, sulfur can be provided by H(2)S. The sequence is that of Thiazole synthase from Clostridium perfringens (strain 13 / Type A).